The following is a 391-amino-acid chain: Processive diacylglycerol beta-glucosyltransferase (391 aa).

Belongs to the glycosyltransferase 28 family. UgtP subfamily.

It is found in the cell membrane. It catalyses the reaction a 1,2-diacyl-3-O-(beta-D-glucopyranosyl)-sn-glycerol + UDP-alpha-D-glucose = a 1,2-diacyl-3-O-(beta-D-Glc-(1-&gt;6)-beta-D-Glc)-sn-glycerol + UDP + H(+). The enzyme catalyses a 1,2-diacyl-sn-glycerol + UDP-alpha-D-glucose = a 1,2-diacyl-3-O-(beta-D-glucopyranosyl)-sn-glycerol + UDP + H(+). The protein operates within glycolipid metabolism; diglucosyl-diacylglycerol biosynthesis. Processive glucosyltransferase involved in the biosynthesis of both the bilayer- and non-bilayer-forming membrane glucolipids. Is able to successively transfer two glucosyl residues to diacylglycerol (DAG), thereby catalyzing the formation of beta-monoglucosyl-DAG (3-O-(beta-D-glucopyranosyl)-1,2-diacyl-sn-glycerol) and beta-diglucosyl-DAG (3-O-(beta-D-glucopyranosyl-beta-(1-&gt;6)-D-glucopyranosyl)-1,2-diacyl-sn-glycerol). Beta-diglucosyl-DAG is the predominant glycolipid found in Bacillales and is also used as a membrane anchor for lipoteichoic acid (LTA). This chain is Processive diacylglycerol beta-glucosyltransferase, found in Staphylococcus haemolyticus (strain JCSC1435).